The sequence spans 1966 residues: Alpha-protein kinase 2 (1966 aa).

6 disordered regions span residues 23–65 (NSSP…STGL), 211–231 (AMNS…DTDK), 1211–1259 (LKSN…AYSD), 1303–1365 (SLPN…EGAG), 1386–1423 (KTQG…VNGK), and 1437–1463 (NKPV…SVRP). The span at 211-227 (AMNSEQSPDQPFSIASN) shows a compositional bias: polar residues. Over residues 1211-1221 (LKSNKKSSSSD) the composition is skewed to low complexity. Positions 1325–1342 (SDGKMRSKHKEKPDDKQQ) are enriched in basic and acidic residues. A compositionally biased stretch (basic residues) spans 1388–1397 (QGKKKKKHVQ). Residues 1401-1417 (PKPENDAPTDVRSESRQ) show a composition bias toward basic and acidic residues. The region spanning 1577 to 1659 (PRVVSEIQAD…SLIVANISVS (83 aa)) is the Ig-like domain. Cys-1599 and Cys-1649 are joined by a disulfide. In terms of domain architecture, Alpha-type protein kinase spans 1702 to 1934 (KEDFLSDQYF…YCELLGLVSL (233 aa)). Residues 1937 to 1966 (KPKRTVAPPKPKTQPVPKKKTFGPVLNAKS) are disordered.

This sequence belongs to the protein kinase superfamily. Alpha-type protein kinase family. ALPK subfamily. Expressed in developing cardiac tissue.

The protein localises to the basolateral cell membrane. It carries out the reaction L-seryl-[protein] + ATP = O-phospho-L-seryl-[protein] + ADP + H(+). The catalysed reaction is L-threonyl-[protein] + ATP = O-phospho-L-threonyl-[protein] + ADP + H(+). Functionally, protein kinase that recognizes phosphorylation sites in which the surrounding peptides have an alpha-helical conformation. Regulates cardiac development and cardiomyocyte differentiation by negatively regulating Wnt/beta-catenin signaling. This Danio rerio (Zebrafish) protein is Alpha-protein kinase 2 (alpk2).